The following is a 68-amino-acid chain: Protein transport protein Sec61 gamma-1 subunit (68 aa).

The Cytoplasmic segment spans residues 1–32; that stretch reads MDKVVKFAEPGRAFAKDSIRLVKRCTKPDRKE. Residues 33-61 form a helical membrane-spanning segment; sequence FQKIAIATAVGFAIMGFIGFFVKLIHIPI. Residues 62–68 are Extracellular-facing; it reads NNIIVGS.

It belongs to the SecE/SEC61-gamma family. In terms of assembly, heterotrimeric complex composed of SEC61-alpha, SEC61-beta and SEC61-gamma.

It localises to the endoplasmic reticulum membrane. Its function is as follows. Necessary for protein translocation in the endoplasmic reticulum. The protein is Protein transport protein Sec61 gamma-1 subunit (SEC61G1) of Drosophila melanogaster (Fruit fly).